A 415-amino-acid polypeptide reads, in one-letter code: uncharacterized protein (415 aa).

This is an uncharacterized protein from Escherichia coli (strain K12).